Reading from the N-terminus, the 67-residue chain is Large ribosomal subunit protein uL30 (67 aa).

It belongs to the universal ribosomal protein uL30 family. In terms of assembly, part of the 50S ribosomal subunit.

The chain is Large ribosomal subunit protein uL30 from Sinorhizobium medicae (strain WSM419) (Ensifer medicae).